The sequence spans 179 residues: Inosine/xanthosine triphosphatase (179 aa).

8-13 lines the substrate pocket; sequence TTNPAK. Mg(2+)-binding residues include aspartate 38 and glutamate 68. Substrate is bound at residue 68-69; sequence EA.

Belongs to the YjjX NTPase family. As to quaternary structure, homodimer. Mg(2+) is required as a cofactor. Requires Mn(2+) as cofactor.

The enzyme catalyses XTP + H2O = XDP + phosphate + H(+). It catalyses the reaction ITP + H2O = IDP + phosphate + H(+). Its function is as follows. Phosphatase that hydrolyzes non-canonical purine nucleotides such as XTP and ITP to their respective diphosphate derivatives. Probably excludes non-canonical purines from DNA/RNA precursor pool, thus preventing their incorporation into DNA/RNA and avoiding chromosomal lesions. The chain is Inosine/xanthosine triphosphatase from Proteus mirabilis (strain HI4320).